The following is a 73-amino-acid chain: Translational regulator CsrA (73 aa).

This sequence belongs to the CsrA/RsmA family. Homodimer; the beta-strands of each monomer intercalate to form a hydrophobic core, while the alpha-helices form wings that extend away from the core.

The protein localises to the cytoplasm. A translational regulator that binds mRNA to regulate translation initiation and/or mRNA stability. Usually binds in the 5'-UTR at or near the Shine-Dalgarno sequence preventing ribosome-binding, thus repressing translation. Its main target seems to be the major flagellin gene, while its function is anatagonized by FliW. This Clostridium kluyveri (strain NBRC 12016) protein is Translational regulator CsrA.